Reading from the N-terminus, the 269-residue chain is Undecaprenyl-diphosphatase (269 aa).

The next 6 membrane-spanning stretches (helical) occupy residues 43–63 (KGKVFEIVIQLGAILAVCWEY), 82–102 (FILNLFVAFLPAAIFGLLLHG), 108–128 (LFSSITVACALIVGGFAILLV), 188–208 (ATEFSFFLAIPVMLAATFYDV), 222–242 (MFAVGFITAFLAALVAIKTLI), and 249–269 (DFKGFAYYRIVLGIIVLAYYW).

It belongs to the UppP family.

The protein resides in the cell inner membrane. It carries out the reaction di-trans,octa-cis-undecaprenyl diphosphate + H2O = di-trans,octa-cis-undecaprenyl phosphate + phosphate + H(+). In terms of biological role, catalyzes the dephosphorylation of undecaprenyl diphosphate (UPP). Confers resistance to bacitracin. The protein is Undecaprenyl-diphosphatase of Methylobacillus flagellatus (strain ATCC 51484 / DSM 6875 / VKM B-1610 / KT).